Here is a 238-residue protein sequence, read N- to C-terminus: Probable transcriptional regulatory protein HH_1604 (238 aa).

It belongs to the TACO1 family.

It is found in the cytoplasm. This Helicobacter hepaticus (strain ATCC 51449 / 3B1) protein is Probable transcriptional regulatory protein HH_1604.